Consider the following 501-residue polypeptide: Beta-secretase 1 (501 aa).

The N-terminal stretch at Met1–Gly21 is a signal peptide. The propeptide occupies Thr22 to Arg45. Residues Thr22–Thr457 are Extracellular-facing. Positions Leu39–Gly58 are disordered. The 342-residue stretch at Tyr75–Ala416 folds into the Peptidase A1 domain. Asp93 is an active-site residue. An N6-acetyllysine modification is found at Lys126. Asn153, Asn172, and Asn223 each carry an N-linked (GlcNAc...) asparagine glycan. Intrachain disulfides connect Cys216-Cys420, Cys278-Cys443, and Cys330-Cys380. 3 positions are modified to N6-acetyllysine: Lys275, Lys279, and Lys285. Residue Asp289 is part of the active site. 3 positions are modified to N6-acetyllysine: Lys299, Lys300, and Lys307. Asn354 carries N-linked (GlcNAc...) asparagine glycosylation. The helical transmembrane segment at Ile458–Cys478 threads the bilayer. 4 S-palmitoyl cysteine lipidation sites follow: Cys474, Cys478, Cys482, and Cys485. At Gln479–Lys501 the chain is on the cytoplasmic side. Positions Gln479–Lys501 are interaction with RTN3. The short motif at Asp496–Leu500 is the DXXLL element. Ser498 is modified (phosphoserine). Residue Lys501 forms a Glycyl lysine isopeptide (Lys-Gly) (interchain with G-Cter in ubiquitin) linkage.

Belongs to the peptidase A1 family. Monomer. Interacts (via DXXLL motif) with GGA1, GGA2 and GGA3 (via their VHS domain); the interaction highly increases when BACE1 is phosphorylated at Ser-498. Interacts with RTN1; RTN2; RTN3 and RTN4; the interaction leads to inhibition of amyloid precursor protein processing. Interacts with SNX6. Interacts with PCSK9. Interacts with NAT8 and NAT8B. Interacts with BIN1. Interacts (via extracellular domain) with ADAM10 (via extracellular domain). Interacts with SORL1; this interaction may affect binding with APP and hence reduce APP cleavage. Interacts with NRDC AND NRG1. N-Glycosylated. Addition of a bisecting N-acetylglucosamine by MGAT3 blocks lysosomal targeting, further degradation and is required for maintaining stability under stress conditions. In terms of processing, palmitoylation mediates lipid raft localization. Post-translationally, acetylated in the endoplasmic reticulum at Lys-126, Lys-275, Lys-279, Lys-285, Lys-299, Lys-300 and Lys-307. Acetylation by NAT8 and NAT8B is transient and deacetylation probably occurs in the Golgi. Acetylation regulates the maturation, the transport to the plasma membrane, the stability and the expression of the protein. Ubiquitinated at Lys-501, ubiquitination leads to lysosomal degradation. Monoubiquitinated and 'Lys-63'-linked polyubitinated. Deubiquitnated by USP8; inhibits lysosomal degradation. In terms of processing, phosphorylation at Ser-498 is required for interaction with GGA1 and retrograded transport from endosomal compartments to the trans-Golgi network. Non-phosphorylated BACE1 enters a direct recycling route to the cell surface. As to expression, expressed in the brain, specifically in neurons and astrocytes (at protein level).

It is found in the cell membrane. The protein localises to the golgi apparatus. The protein resides in the trans-Golgi network. Its subcellular location is the endoplasmic reticulum. It localises to the endosome. It is found in the late endosome. The protein localises to the early endosome. The protein resides in the cell surface. Its subcellular location is the cytoplasmic vesicle membrane. It localises to the membrane raft. It is found in the lysosome. The protein localises to the recycling endosome. The protein resides in the cell projection. Its subcellular location is the axon. It localises to the dendrite. It catalyses the reaction Broad endopeptidase specificity. Cleaves Glu-Val-Asn-Leu-|-Asp-Ala-Glu-Phe in the Swedish variant of Alzheimer's amyloid precursor protein.. Inhibited by RTN3 and RTN4. Its function is as follows. Responsible for the proteolytic processing of the amyloid precursor protein (APP). Cleaves at the N-terminus of the A-beta peptide sequence, between residues 671 and 672 of APP, leads to the generation and extracellular release of beta-cleaved soluble APP, and a corresponding cell-associated C-terminal fragment which is later released by gamma-secretase. Cleaves CHL1. The polypeptide is Beta-secretase 1 (Mus musculus (Mouse)).